A 188-amino-acid polypeptide reads, in one-letter code: Nicotinamide-nucleotide adenylyltransferase (188 aa).

A disordered region spans residues 166-188 (SDSLERYAATGESLPESLDDLDD).

It belongs to the archaeal NMN adenylyltransferase family.

It localises to the cytoplasm. It carries out the reaction beta-nicotinamide D-ribonucleotide + ATP + H(+) = diphosphate + NAD(+). The protein operates within cofactor biosynthesis; NAD(+) biosynthesis; NAD(+) from nicotinamide D-ribonucleotide: step 1/1. In Haloarcula marismortui (strain ATCC 43049 / DSM 3752 / JCM 8966 / VKM B-1809) (Halobacterium marismortui), this protein is Nicotinamide-nucleotide adenylyltransferase.